Consider the following 200-residue polypeptide: MSFSPLIRQLIDGLRILPGVGQKTAQRMALQLLERDRSGGLRLAQALTQAMEGVGHCRQCRTLTEQELCPQCADPRRDDTQLCVVEGPTDVYAVEQTGYRGRYFVLKGHLSPLDGLGPEAIGIPQLMARIEEQGTFTEVILATNPTVEGEATAHYIAQLLSEKGLVASRIAHGVPLGGELEMVDGGTLAHAFAGRRPISL.

The C4-type zinc-finger motif lies at C57–C72. Positions T80–P175 constitute a Toprim domain.

Belongs to the RecR family.

May play a role in DNA repair. It seems to be involved in an RecBC-independent recombinational process of DNA repair. It may act with RecF and RecO. The polypeptide is Recombination protein RecR (Pseudomonas putida (strain ATCC 700007 / DSM 6899 / JCM 31910 / BCRC 17059 / LMG 24140 / F1)).